Consider the following 675-residue polypeptide: Potassium-transporting ATPase ATP-binding subunit 2 (675 aa).

4 consecutive transmembrane segments (helical) span residues 34–54 (IMFVVEVGMVLTLILICFPDI), 65–85 (LITIFIILLITILFANFSEAF), 216–236 (IALFTLLTTLTIIFLVVIVTL), and 245–265 (LILPIAMLIALTVCLIPTTIG). Asp-304 serves as the catalytic 4-aspartylphosphate intermediate. Residues Asp-341, Glu-345, 372-379 (FTAETRMS), and Lys-390 contribute to the ATP site. Mg(2+) contacts are provided by Asp-513 and Asp-517. 3 consecutive transmembrane segments (helical) span residues 569–591 (ALTTFSLANDVAKYFAILPALMM), 611–631 (AIISALIFNALIIVALIPIAM), and 644–664 (IFINNMLIYGLGGLIVPFLGI).

This sequence belongs to the cation transport ATPase (P-type) (TC 3.A.3) family. Type IA subfamily. In terms of assembly, the system is composed of three essential subunits: KdpA, KdpB and KdpC.

It is found in the cell membrane. It carries out the reaction K(+)(out) + ATP + H2O = K(+)(in) + ADP + phosphate + H(+). In terms of biological role, part of the high-affinity ATP-driven potassium transport (or Kdp) system, which catalyzes the hydrolysis of ATP coupled with the electrogenic transport of potassium into the cytoplasm. This subunit is responsible for energy coupling to the transport system and for the release of the potassium ions to the cytoplasm. This is Potassium-transporting ATPase ATP-binding subunit 2 from Staphylococcus aureus (strain Mu50 / ATCC 700699).